We begin with the raw amino-acid sequence, 635 residues long: Biosynthetic arginine decarboxylase (635 aa).

Position 100 is an N6-(pyridoxal phosphate)lysine (Lys-100). 282–292 is a binding site for substrate; the sequence is VDIGGGLGVDY.

Belongs to the Orn/Lys/Arg decarboxylase class-II family. SpeA subfamily. It depends on Mg(2+) as a cofactor. Pyridoxal 5'-phosphate serves as cofactor.

The catalysed reaction is L-arginine + H(+) = agmatine + CO2. The protein operates within amine and polyamine biosynthesis; agmatine biosynthesis; agmatine from L-arginine: step 1/1. Functionally, catalyzes the biosynthesis of agmatine from arginine. The chain is Biosynthetic arginine decarboxylase from Geobacter sulfurreducens (strain ATCC 51573 / DSM 12127 / PCA).